Consider the following 615-residue polypeptide: DNA mismatch repair protein MutL (615 aa).

A compositionally biased stretch (low complexity) spans 378 to 391 (PAPASGSRPAAPWP). The segment at 378 to 397 (PAPASGSRPAAPWPNAQPGY) is disordered.

The protein belongs to the DNA mismatch repair MutL/HexB family.

In terms of biological role, this protein is involved in the repair of mismatches in DNA. It is required for dam-dependent methyl-directed DNA mismatch repair. May act as a 'molecular matchmaker', a protein that promotes the formation of a stable complex between two or more DNA-binding proteins in an ATP-dependent manner without itself being part of a final effector complex. This Escherichia coli O127:H6 (strain E2348/69 / EPEC) protein is DNA mismatch repair protein MutL.